Consider the following 784-residue polypeptide: Ent-kaurene synthase 1, chloroplastic (784 aa).

A chloroplast-targeting transit peptide spans 1–28 (MNLSLCIASPLLTKSSRPTALSAIHTAS). Mg(2+) contacts are provided by aspartate 528, aspartate 532, asparagine 672, and glutamate 680. The DDXXD motif motif lies at 528-532 (DDFFD).

It belongs to the terpene synthase family. It depends on Mg(2+) as a cofactor. As to expression, accumulates in leaves.

It localises to the plastid. The protein localises to the chloroplast. It carries out the reaction ent-copalyl diphosphate = ent-kaur-16-ene + diphosphate. The protein operates within secondary metabolite biosynthesis; terpenoid biosynthesis. It functions in the pathway plant hormone biosynthesis; gibberellin biosynthesis. In terms of biological role, involved in the biosynthesis of ent-kaurene diterpenoids natural products such as oridonin, miltiradiene, eriocalyxin B and nezukol, known to exhibit antitumor, anti-inflammatory and antibacterial activities, and in the production of gibberellins phytohormones. Catalyzes the conversion of ent-copalyl diphosphate (ent-CPP) to ent-kaurene. The polypeptide is Ent-kaurene synthase 1, chloroplastic (Stevia rebaudiana (Stevia)).